The primary structure comprises 600 residues: Elongation factor 4 (600 aa).

A tr-type G domain is found at 5–187 (KYIRNFSIIA…AIINKLPAPK (183 aa)). Residues 17-22 (DHGKST) and 134-137 (NKID) contribute to the GTP site.

The protein belongs to the TRAFAC class translation factor GTPase superfamily. Classic translation factor GTPase family. LepA subfamily.

The protein localises to the cell inner membrane. It carries out the reaction GTP + H2O = GDP + phosphate + H(+). Functionally, required for accurate and efficient protein synthesis under certain stress conditions. May act as a fidelity factor of the translation reaction, by catalyzing a one-codon backward translocation of tRNAs on improperly translocated ribosomes. Back-translocation proceeds from a post-translocation (POST) complex to a pre-translocation (PRE) complex, thus giving elongation factor G a second chance to translocate the tRNAs correctly. Binds to ribosomes in a GTP-dependent manner. This is Elongation factor 4 from Rickettsia prowazekii (strain Madrid E).